The chain runs to 312 residues: Putative B3 domain-containing protein Os10g0537100 (312 aa).

The segment at residues 35-153 is a DNA-binding region (TF-B3); the sequence is FEKVVTPSDV…RLFIDFRRRR (119 aa). Disordered regions lie at residues 161-182 and 286-312; these read FPPTAAPPSHSHHHHQRHHPPL and LLQLPSPSSSTSSSTAGKKMCSLDLGL. Residues 170–180 are compositionally biased toward basic residues; it reads HSHHHHQRHHP. Residues 286–301 are compositionally biased toward low complexity; that stretch reads LLQLPSPSSSTSSSTA.

The protein resides in the nucleus. This is Putative B3 domain-containing protein Os10g0537100 from Oryza sativa subsp. japonica (Rice).